Reading from the N-terminus, the 243-residue chain is Pyridoxine 5'-phosphate synthase (243 aa).

Asparagine 9 contacts 3-amino-2-oxopropyl phosphate. 11–12 (DH) is a 1-deoxy-D-xylulose 5-phosphate binding site. Arginine 20 is a 3-amino-2-oxopropyl phosphate binding site. Histidine 45 serves as the catalytic Proton acceptor. The 1-deoxy-D-xylulose 5-phosphate site is built by arginine 47 and histidine 52. Glutamate 72 serves as the catalytic Proton acceptor. Threonine 102 serves as a coordination point for 1-deoxy-D-xylulose 5-phosphate. Histidine 193 serves as the catalytic Proton donor. Residues glycine 194 and 215–216 (GH) contribute to the 3-amino-2-oxopropyl phosphate site.

This sequence belongs to the PNP synthase family. In terms of assembly, homooctamer; tetramer of dimers.

The protein resides in the cytoplasm. It carries out the reaction 3-amino-2-oxopropyl phosphate + 1-deoxy-D-xylulose 5-phosphate = pyridoxine 5'-phosphate + phosphate + 2 H2O + H(+). It functions in the pathway cofactor biosynthesis; pyridoxine 5'-phosphate biosynthesis; pyridoxine 5'-phosphate from D-erythrose 4-phosphate: step 5/5. Catalyzes the complicated ring closure reaction between the two acyclic compounds 1-deoxy-D-xylulose-5-phosphate (DXP) and 3-amino-2-oxopropyl phosphate (1-amino-acetone-3-phosphate or AAP) to form pyridoxine 5'-phosphate (PNP) and inorganic phosphate. The polypeptide is Pyridoxine 5'-phosphate synthase (Pseudoalteromonas translucida (strain TAC 125)).